We begin with the raw amino-acid sequence, 351 residues long: 2-Hydroxyacid oxidase 2 (351 aa).

Residues serine 2–leucine 351 enclose the FMN hydroxy acid dehydrogenase domain. FMN is bound by residues proline 77–glycine 79, serine 106, and glutamine 128. Tyrosine 130 contacts a 2-oxocarboxylate. Threonine 156 lines the FMN pocket. An a 2-oxocarboxylate-binding site is contributed by arginine 165. The residue at position 178 (threonine 178) is a Phosphothreonine. Lysine 222 contacts FMN. The Proton acceptor role is filled by histidine 246. A 2-oxocarboxylate is bound at residue arginine 249. Residues aspartate 277–arginine 281 and glycine 300–arginine 301 each bind FMN. Residues serine 349–leucine 351 carry the Microbody targeting signal motif.

The protein belongs to the FMN-dependent alpha-hydroxy acid dehydrogenase family. In terms of assembly, homotetramer. It depends on FMN as a cofactor. As to expression, expressed in the liver and kidney.

Its subcellular location is the peroxisome. The catalysed reaction is a (2S)-2-hydroxycarboxylate + O2 = a 2-oxocarboxylate + H2O2. The enzyme catalyses 2-hydroxyhexadecanoate + O2 = 2-oxohexadecanoate + H2O2. It carries out the reaction 2-hydroxyoctanoate + O2 = 2-oxooctanoate + H2O2. It participates in lipid metabolism; fatty acid metabolism. Functionally, oxidase that catalyzes the oxidation of medium and long chain hydroxyacids such as 2-hydroxyhexadecanoate and 2-hydroxyoctanoate, to the correspondong 2-oxoacids. Its role in the oxidation of 2-hydroxy fatty acids may contribute to the general pathway of fatty acid alpha-oxidation. Active in vitro with the artificial electron acceptor 2,6-dichlorophenolindophenol (DCIP), but O2 is believed to be the physiological electron acceptor, leading to the production of H2O2. Is not active on glycolate, glyoxylate, L-lactate and 2-hydroxybutanoate. In Homo sapiens (Human), this protein is 2-Hydroxyacid oxidase 2 (HAO2).